A 530-amino-acid chain; its full sequence is Probable cytochrome P450 519A1 (530 aa).

A helical transmembrane segment spans residues 1-21 (MESIINLIFYIIIFLILIDFL). Cys476 contributes to the heme binding site.

This sequence belongs to the cytochrome P450 family. Heme serves as cofactor.

It localises to the membrane. The polypeptide is Probable cytochrome P450 519A1 (cyp519A1) (Dictyostelium discoideum (Social amoeba)).